A 183-amino-acid polypeptide reads, in one-letter code: Acidic proline-rich protein HP43A (183 aa).

A signal peptide spans 1–14 (MLVVLLTAALLAEH). The disordered stretch occupies residues 22–183 (ISQLSEEEQQ…QGSEEQSTSL (162 aa)). Positions 52 to 65 (SDEEGDDDGEEDGN) are enriched in acidic residues. 5 tandem repeats follow at residues 81–100 (RPPK…QQQN), 101–120 (RPPK…QQQN), 121–140 (RPPK…QQQN), 141–160 (RPPK…QQQN), and 161–180 (RPPK…EEQS). The segment covering 86–183 (GNQQGPPQQE…QGSEEQSTSL (98 aa)) has biased composition (low complexity).

Its subcellular location is the secreted. The polypeptide is Acidic proline-rich protein HP43A (H29) (Mesocricetus auratus (Golden hamster)).